A 62-amino-acid chain; its full sequence is Large ribosomal subunit protein bL33 (62 aa).

It belongs to the bacterial ribosomal protein bL33 family.

The protein is Large ribosomal subunit protein bL33 of Azobacteroides pseudotrichonymphae genomovar. CFP2.